The primary structure comprises 808 residues: Disks large-associated protein 5 (808 aa).

Phosphoserine is present on residues S66 and S70. A coiled-coil region spans residues 88–119 (QRKQLLQKYKEEKQLQKLKEQREKAKRGVFKV). The interval 134–282 (QRGAKAEPEK…QTRETSEMGP (149 aa)) is disordered. Basic and acidic residues-rich tracts occupy residues 135 to 145 (RGAKAEPEKAF) and 180 to 193 (QTSE…ERKV). S201 carries the post-translational modification Phosphoserine. Basic and acidic residues-rich tracts occupy residues 232-241 (TNEKGSERMR) and 249-278 (KKPE…RETS). S328 is subject to Phosphoserine. A phosphothreonine mark is found at T337 and T386. Residues 377 to 413 (HVLNQKGASTSDSNHASVKGVPCSEGSEGQTSQPPHD) are disordered. The segment covering 382 to 392 (KGASTSDSNHA) has biased composition (polar residues). S598 carries the post-translational modification Phosphoserine. S607 is modified (phosphoserine; by AURKA). A Phosphoserine modification is found at S612. T617 carries the phosphothreonine modification. S620 carries the phosphoserine modification. The tract at residues 629 to 654 (RAAGDLLRQKMPLKKPDPQSSKSEHV) is disordered. Basic and acidic residues predominate over residues 642 to 654 (KKPDPQSSKSEHV). Position 728 is a phosphothreonine (T728). Residues 735–757 (SNPETNTSSQSNTSQEEAEASQS) are disordered. S743 is modified (phosphoserine). A Phosphoserine; by AURKA modification is found at S797. A Phosphoserine modification is found at S806.

This sequence belongs to the SAPAP family. As to quaternary structure, interacts with CDC2. Interacts with the C-terminal proline-rich region of FBXO7. Recruited by FBXO7 to a SCF (SKP1-CUL1-F-box) protein complex in a CDC2/Cyclin B-phosphorylation dependent manner. Interacts with CDH1. Post-translationally, ubiquitinated, leading to its degradation. In terms of processing, decreased phosphorylation levels are associated with the differentiation of intestinal epithelial cells. Expressed at low levels in normal resting liver. Up-regulated in regenerating liver after partial hepatectomy.

Its subcellular location is the nucleus. It localises to the cytoplasm. The protein resides in the cytoskeleton. The protein localises to the spindle. In terms of biological role, potential cell cycle regulator that may play a role in carcinogenesis of cancer cells. Mitotic phosphoprotein regulated by the ubiquitin-proteasome pathway. Key regulator of adherens junction integrity and differentiation that may be involved in CDH1-mediated adhesion and signaling in epithelial cells. The protein is Disks large-associated protein 5 (Dlgap5) of Mus musculus (Mouse).